A 182-amino-acid chain; its full sequence is CASP-like protein 5B1 (182 aa).

Residues 1 to 20 (GDASHAVDHPIGGHPEHEHD) are disordered. The Cytoplasmic portion of the chain corresponds to 1-41 (GDASHAVDHPIGGHPEHEHDLREEEGPLIFPMKDLPGTPGT). A helical transmembrane segment spans residues 42-62 (VGGLALRMGQFIFAAASVVIM). Residues 63-73 (VTSDEFINFTA) lie on the Extracellular side of the membrane. Asn-70 is a glycosylation site (N-linked (GlcNAc...) asparagine). The chain crosses the membrane as a helical span at residues 74 to 94 (FCYLAAAMALQFLWSFVLATI). Topologically, residues 95-108 (DVYALLIKRGLPNS) are cytoplasmic. A helical transmembrane segment spans residues 109–129 (ILLSLFVVGDWVTATLSLAAA). At 130 to 159 (CSTAGITVLFDKDLNYCDQMHCRRYQLSAT) the chain is on the extracellular side. A helical membrane pass occupies residues 160 to 180 (MAFFSWVLIAISSLITLLLLV). Over 181–182 (SE) the chain is Cytoplasmic.

It belongs to the Casparian strip membrane proteins (CASP) family. In terms of assembly, homodimer and heterodimers.

The protein localises to the cell membrane. In Picea sitchensis (Sitka spruce), this protein is CASP-like protein 5B1.